The sequence spans 332 residues: MKKHAKVYYSENLVEQVNEFETSFEIKPLERGLGNTLGNALRRTVLSSIPSCAVFGVKIEGIKHEFTVLDDVIEDVVTILNNLKRVRFFYNPSVFSQNSIHVASFLGQKAGQIYARDIESHSGLKIVNPDLYIADVSKVGALKFELFITNGKGFVDFETNKKYVNEVISLLESQIEGSVLAVDSDFSPVLNANYQAVEINSASPIIEEKLNFSIKTDGSIFAKDALSQGAKILIAHLNLLADVENLNKFSADFFGDQEIKEEPIRRFSNSIDALDLSVRSLNALRRAQYYKISDIEKLSQDDFENIKNLGRKSVQEIMEKLQNYKNENKGEN.

The alpha N-terminal domain (alpha-NTD) stretch occupies residues 1-244 (MKKHAKVYYS…AHLNLLADVE (244 aa)). Residues 259–332 (IKEEPIRRFS…NYKNENKGEN (74 aa)) form an alpha C-terminal domain (alpha-CTD) region.

It belongs to the RNA polymerase alpha chain family. Homodimer. The RNAP catalytic core consists of 2 alpha, 1 beta, 1 beta' and 1 omega subunit. When a sigma factor is associated with the core the holoenzyme is formed, which can initiate transcription.

It catalyses the reaction RNA(n) + a ribonucleoside 5'-triphosphate = RNA(n+1) + diphosphate. In terms of biological role, DNA-dependent RNA polymerase catalyzes the transcription of DNA into RNA using the four ribonucleoside triphosphates as substrates. The polypeptide is DNA-directed RNA polymerase subunit alpha (Mesomycoplasma hyopneumoniae (strain 232) (Mycoplasma hyopneumoniae)).